Here is a 510-residue protein sequence, read N- to C-terminus: Proline--tRNA ligase 2 (510 aa).

The protein belongs to the class-II aminoacyl-tRNA synthetase family. ProS type 3 subfamily. As to quaternary structure, homodimer.

Its subcellular location is the cytoplasm. The enzyme catalyses tRNA(Pro) + L-proline + ATP = L-prolyl-tRNA(Pro) + AMP + diphosphate. Catalyzes the attachment of proline to tRNA(Pro) in a two-step reaction: proline is first activated by ATP to form Pro-AMP and then transferred to the acceptor end of tRNA(Pro). The protein is Proline--tRNA ligase 2 of Anaeromyxobacter dehalogenans (strain 2CP-C).